The chain runs to 289 residues: MASMQDLKRRMESITVTHKITKAMKMLSTVKLNRFKATLGKTKEFYQEFYEVIGAVITNYNKTKPRTTTPTNQSTKRLWIVINTQLGLCGSYNTNVGKLLVSELAKDDEIILVGTKLNSFLRTRNHEDQIIHTYSINDKNIDFESSYMIGKHVLELHEKNQYDSIDCVYTNYINSLNFEAKKIQLIPADPSIFQADTLDRINDKFPKNISFEPGVDVIIPALEKQLLQVILYGCLIESKVCEYASRRNAMDTAAKNADDLYNKYKLLYNQLRQAKITQEINEIVAGAAK.

It belongs to the ATPase gamma chain family. As to quaternary structure, F-type ATPases have 2 components, CF(1) - the catalytic core - and CF(0) - the membrane proton channel. CF(1) has five subunits: alpha(3), beta(3), gamma(1), delta(1), epsilon(1). CF(0) has three main subunits: a, b and c.

The protein localises to the cell membrane. In terms of biological role, produces ATP from ADP in the presence of a proton gradient across the membrane. The gamma chain is believed to be important in regulating ATPase activity and the flow of protons through the CF(0) complex. This Mycoplasmoides gallisepticum (strain R(low / passage 15 / clone 2)) (Mycoplasma gallisepticum) protein is ATP synthase gamma chain.